The primary structure comprises 332 residues: Palmitoyltransferase ZDHHC15B (332 aa).

Residues Met1–Phe14 are Cytoplasmic-facing. The helical transmembrane segment at Ser15–Phe35 threads the bilayer. Over Glu36–Thr50 the chain is Lumenal. Residues Tyr51–Phe71 traverse the membrane as a helical segment. The Cytoplasmic segment spans residues Thr72–Lys166. Positions Arg123–Ser173 constitute a DHHC domain. 2 residues coordinate Zn(2+): Cys125 and Cys128. Substrate is bound at residue Lys132. Residues His138, Cys139, Cys142, Cys145, and His152 each contribute to the Zn(2+) site. Cys153 functions as the S-palmitoyl cysteine intermediate in the catalytic mechanism. Cys159 provides a ligand contact to Zn(2+). Residues Phe167–Phe187 form a helical membrane-spanning segment. Residues Gln188–Lys204 are Lumenal-facing. A helical membrane pass occupies residues Phe205–His228. The Cytoplasmic portion of the chain corresponds to Cys229–Ser332. The disordered stretch occupies residues Glu305–Ser332.

The protein belongs to the DHHC palmitoyltransferase family. In terms of processing, autopalmitoylated (in vitro).

Its subcellular location is the golgi apparatus membrane. It is found in the postsynaptic density. The enzyme catalyses L-cysteinyl-[protein] + hexadecanoyl-CoA = S-hexadecanoyl-L-cysteinyl-[protein] + CoA. The catalysed reaction is L-cysteinyl-[protein] + tetradecanoyl-CoA = S-tetradecanoyl-L-cysteinyl-[protein] + CoA. It catalyses the reaction L-cysteinyl-[protein] + octadecanoyl-CoA = S-octadecanoyl-L-cysteinyl-[protein] + CoA. Its function is as follows. Palmitoyltransferase that catalyzes the addition of palmitate onto various protein substrates. Has no stringent fatty acid selectivity and in addition to palmitate can also transfer onto target proteins myristate from tetradecanoyl-CoA and stearate from octadecanoyl-CoA. May thereby regulate target proteins association and localization to membranes. In the nervous system, probably catalyzes the palmitoylation of synaptic proteins and is involved in the differentiation of dopaminergic neurons and the development of the diencephalon. The chain is Palmitoyltransferase ZDHHC15B (zdhhc15b) from Danio rerio (Zebrafish).